The chain runs to 143 residues: Large ribosomal subunit protein uL13 (143 aa).

It belongs to the universal ribosomal protein uL13 family. In terms of assembly, part of the 50S ribosomal subunit.

Its function is as follows. This protein is one of the early assembly proteins of the 50S ribosomal subunit, although it is not seen to bind rRNA by itself. It is important during the early stages of 50S assembly. This Finegoldia magna (strain ATCC 29328 / DSM 20472 / WAL 2508) (Peptostreptococcus magnus) protein is Large ribosomal subunit protein uL13.